A 41-amino-acid polypeptide reads, in one-letter code: Large ribosomal subunit protein bL36 (41 aa).

This sequence belongs to the bacterial ribosomal protein bL36 family.

The polypeptide is Large ribosomal subunit protein bL36 (Beijerinckia indica subsp. indica (strain ATCC 9039 / DSM 1715 / NCIMB 8712)).